Here is a 377-residue protein sequence, read N- to C-terminus: Flagellar P-ring protein (377 aa).

The first 30 residues, 1–30 (MLARFLSSLLKASVTALAVVVAFGFAANFA), serve as a signal peptide directing secretion.

The protein belongs to the FlgI family. The basal body constitutes a major portion of the flagellar organelle and consists of four rings (L,P,S, and M) mounted on a central rod.

It localises to the periplasm. Its subcellular location is the bacterial flagellum basal body. In terms of biological role, assembles around the rod to form the L-ring and probably protects the motor/basal body from shearing forces during rotation. The sequence is that of Flagellar P-ring protein from Cupriavidus pinatubonensis (strain JMP 134 / LMG 1197) (Cupriavidus necator (strain JMP 134)).